The following is a 607-amino-acid chain: UvrABC system protein C (607 aa).

Residues 16 to 94 (GRPGVYRMFD…IKEWRPPYNI (79 aa)) enclose the GIY-YIG domain. The region spanning 203-238 (NALSDELNASMEKAAMALDFERAAELRDQVALLRRV) is the UVR domain.

The protein belongs to the UvrC family. Interacts with UvrB in an incision complex.

It is found in the cytoplasm. Functionally, the UvrABC repair system catalyzes the recognition and processing of DNA lesions. UvrC both incises the 5' and 3' sides of the lesion. The N-terminal half is responsible for the 3' incision and the C-terminal half is responsible for the 5' incision. The chain is UvrABC system protein C from Pseudomonas syringae pv. syringae (strain B728a).